A 152-amino-acid polypeptide reads, in one-letter code: Transcriptional repressor NrdR (152 aa).

The segment at 3–34 (CPFCSTEETKVIDSRLVSEGYQVRRRRECTNC) is a zinc-finger region. Residues 49–139 (PKIVKTDGYR…VYLSFENINE (91 aa)) form the ATP-cone domain.

The protein belongs to the NrdR family. Requires Zn(2+) as cofactor.

In terms of biological role, negatively regulates transcription of bacterial ribonucleotide reductase nrd genes and operons by binding to NrdR-boxes. The polypeptide is Transcriptional repressor NrdR (Actinobacillus succinogenes (strain ATCC 55618 / DSM 22257 / CCUG 43843 / 130Z)).